The following is a 363-amino-acid chain: Protein RecA (363 aa).

An ATP-binding site is contributed by 77–84; the sequence is GPESSGKT.

This sequence belongs to the RecA family.

The protein resides in the cytoplasm. Can catalyze the hydrolysis of ATP in the presence of single-stranded DNA, the ATP-dependent uptake of single-stranded DNA by duplex DNA, and the ATP-dependent hybridization of homologous single-stranded DNAs. It interacts with LexA causing its activation and leading to its autocatalytic cleavage. This Agrobacterium fabrum (strain C58 / ATCC 33970) (Agrobacterium tumefaciens (strain C58)) protein is Protein RecA.